A 512-amino-acid chain; its full sequence is Glucagon-like peptide 2 receptor (512 aa).

Over methionine 1–threonine 135 the chain is Extracellular. 3 disulfide bridges follow: cysteine 43–cysteine 65, cysteine 56–cysteine 97, and cysteine 78–cysteine 119. Residue asparagine 73 is glycosylated (N-linked (GlcNAc...) asparagine). A helical membrane pass occupies residues leucine 136–threonine 160. Topologically, residues leucine 161 to arginine 172 are cytoplasmic. The helical transmembrane segment at asparagine 173 to phenylalanine 197 threads the bilayer. Over tyrosine 198–arginine 223 the chain is Extracellular. Residues serine 224–leucine 247 form a helical membrane-spanning segment. Residues histidine 248–leucine 261 lie on the Cytoplasmic side of the membrane. The helical transmembrane segment at tryptophan 262–valine 283 threads the bilayer. At arginine 284–isoleucine 301 the chain is on the extracellular side. The chain crosses the membrane as a helical span at residues tryptophan 302–leucine 324. Residues lysine 325–serine 348 are Cytoplasmic-facing. A helical membrane pass occupies residues threonine 349–threonine 367. The Extracellular portion of the chain corresponds to aspartate 368–arginine 379. A helical transmembrane segment spans residues leucine 380–phenylalanine 400. At alanine 401–isoleucine 512 the chain is on the cytoplasmic side. The segment at serine 458–glutamate 494 is disordered.

Belongs to the G-protein coupled receptor 2 family.

Its subcellular location is the cell membrane. This is a receptor for glucagon-like peptide 2. The activity of this receptor is mediated by G proteins which activate adenylyl cyclase. This Mus musculus (Mouse) protein is Glucagon-like peptide 2 receptor (Glp2r).